The sequence spans 513 residues: Ribonuclease Y (513 aa).

A helical transmembrane segment spans residues 3–23; the sequence is IGTLLLFTFLGLVAGATAVWL. Residues 77–96 form a disordered region; the sequence is LQSVESKLKSREQTLNQRQE. Positions 82–96 are enriched in basic and acidic residues; that stretch reads SKLKSREQTLNQRQE. A KH domain is found at 203-263; that stretch reads SVTVFHIESD…VRREIARLAL (61 aa). Positions 329–422 constitute an HD domain; the sequence is LLQHSRETAN…VQVCDAISGA (94 aa).

The protein belongs to the RNase Y family.

The protein resides in the cell membrane. Its function is as follows. Endoribonuclease that initiates mRNA decay. This chain is Ribonuclease Y, found in Porphyromonas gingivalis (strain ATCC BAA-308 / W83).